Here is a 704-residue protein sequence, read N- to C-terminus: SH3KBP1-binding protein 1 (704 aa).

Alanine 2 is subject to N-acetylalanine. The 70-residue stretch at 19 to 88 (EVIHLNVGGK…LRTKELDPRG (70 aa)) folds into the BTB domain. Positions 145–165 (LVGPQQAGGRPAPVRRSNTMP) are disordered. A Phosphothreonine modification is found at threonine 163. WD repeat units lie at residues 233-280 (RLDW…GGSE), 283-322 (VFHLGVPVEALFFVGNQLIATSHTGRIGVWNAVTKHWQVQ), 324-359 (VQPITSYDAAGSFLLLGCNNGSIYYVDVQKFPLRMK), 428-466 (VHRSPVTKIMLSEKHLISVCADSNHVRTWSVTRFRGMIS), and 548-586 (LECEGSRRLGSRPRRYLLTGQANGSLAMWDLTTAMDGLG). Residues 611-644 (ASSRGSLPSPSPRTSLTSLHSAFSNTSLSSRRGS) are compositionally biased toward low complexity. The segment at 611 to 704 (ASSRGSLPSP…PKTKLNETSF (94 aa)) is disordered. Residues 618 to 623 (PSPSPR) carry the PXXXPR motif. 2 positions are modified to phosphoserine: serine 644 and serine 646. Residues 678 to 683 (PTPAPR) carry the PXXXPR motif.

The protein belongs to the KCTD3 family. Monomer. Interacts with CUL3; interaction is direct and forms a 5:5 heterodecamer. Interacts (via PXXXPR motifs) with SH3KBP1 (via SH3 domains). Directly interacts with cathepsin B/CTSB.

It localises to the lysosome. Its function is as follows. Inhibits CBL-SH3KBP1 complex mediated down-regulation of EGFR signaling by sequestration of SH3KBP1. Binds to SH3KBP1 and prevents its interaction with CBL and inhibits translocation of SH3KBP1 to EGFR containing vesicles upon EGF stimulation. The polypeptide is SH3KBP1-binding protein 1 (SHKBP1) (Bos taurus (Bovine)).